A 302-amino-acid polypeptide reads, in one-letter code: 4-hydroxy-tetrahydrodipicolinate synthase (302 aa).

Thr-55 provides a ligand contact to pyruvate. Residue Tyr-143 is the Proton donor/acceptor of the active site. Residue Lys-171 is the Schiff-base intermediate with substrate of the active site. Ile-213 provides a ligand contact to pyruvate.

It belongs to the DapA family. As to quaternary structure, homotetramer; dimer of dimers.

The protein localises to the cytoplasm. The catalysed reaction is L-aspartate 4-semialdehyde + pyruvate = (2S,4S)-4-hydroxy-2,3,4,5-tetrahydrodipicolinate + H2O + H(+). The protein operates within amino-acid biosynthesis; L-lysine biosynthesis via DAP pathway; (S)-tetrahydrodipicolinate from L-aspartate: step 3/4. Catalyzes the condensation of (S)-aspartate-beta-semialdehyde [(S)-ASA] and pyruvate to 4-hydroxy-tetrahydrodipicolinate (HTPA). In Psychrobacter sp. (strain PRwf-1), this protein is 4-hydroxy-tetrahydrodipicolinate synthase.